The chain runs to 404 residues: Putative arginine deiminase (404 aa).

Cys394 (amidino-cysteine intermediate) is an active-site residue.

Belongs to the arginine deiminase family.

Its subcellular location is the cytoplasm. The catalysed reaction is L-arginine + H2O = L-citrulline + NH4(+). The protein operates within amino-acid degradation; L-arginine degradation via ADI pathway; carbamoyl phosphate from L-arginine: step 1/2. This is Putative arginine deiminase (arcA) from Mycoplasma pneumoniae (strain ATCC 29342 / M129 / Subtype 1) (Mycoplasmoides pneumoniae).